The following is a 117-amino-acid chain: Large ribosomal subunit protein uL18 (117 aa).

The protein belongs to the universal ribosomal protein uL18 family. As to quaternary structure, part of the 50S ribosomal subunit; part of the 5S rRNA/L5/L18/L25 subcomplex. Contacts the 5S and 23S rRNAs.

Functionally, this is one of the proteins that bind and probably mediate the attachment of the 5S RNA into the large ribosomal subunit, where it forms part of the central protuberance. The chain is Large ribosomal subunit protein uL18 from Haemophilus influenzae (strain 86-028NP).